A 160-amino-acid chain; its full sequence is Early E3 18.5 kDa glycoprotein (160 aa).

The signal sequence occupies residues 1 to 17 (MIRYIILGLLTLASAHG). The Lumenal portion of the chain corresponds to 18-124 (TTQKVDFKEP…PPQNCVENTG (107 aa)). 2 disulfides stabilise this stretch: C29–C46 and C40–C101. 2 N-linked (GlcNAc...) asparagine; by host glycosylation sites follow: N30 and N79. Residues 125–145 (TFCCTAMLITVLALVCTLLYI) traverse the membrane as a helical segment. Topologically, residues 146 to 160 (KYKSRRSFIEEKKMP) are cytoplasmic. The Di-lysine motif motif lies at 157–160 (KKMP).

Belongs to the adenoviridae E19 family. Both disulfide bonds are absolutely critical for the interaction with MHC antigens. Post-translationally, N-glycosylated; high-mannose.

It localises to the host endoplasmic reticulum membrane. Its function is as follows. Binds and retains class I heavy chains in the endoplasmic reticulum during the early period of virus infection, thereby impairing their transport to the cell surface. Also delays the expression of class I alleles that it cannot affect by direct retention. Binds transporters associated with antigen processing (TAP) and acts as a tapasin inhibitor, preventing class I/TAP association. In consequence, infected cells are masked for immune recognition by cytotoxic T-lymphocytes. This is Early E3 18.5 kDa glycoprotein from Homo sapiens (Human).